The following is a 233-amino-acid chain: Small ribosomal subunit protein uS3 (233 aa).

Positions 39–107 (VRQFLMKTLE…PVQINISEVR (69 aa)) constitute a KH type-2 domain.

This sequence belongs to the universal ribosomal protein uS3 family. In terms of assembly, part of the 30S ribosomal subunit. Forms a tight complex with proteins S10 and S14.

Its function is as follows. Binds the lower part of the 30S subunit head. Binds mRNA in the 70S ribosome, positioning it for translation. The polypeptide is Small ribosomal subunit protein uS3 (Buchnera aphidicola subsp. Acyrthosiphon pisum (strain APS) (Acyrthosiphon pisum symbiotic bacterium)).